Reading from the N-terminus, the 701-residue chain is Transcriptional regulator Kaiso (701 aa).

The 63-residue stretch at 32–94 (CDVTVIVEDR…IYSSKIVRVR (63 aa)) folds into the BTB domain. Disordered regions lie at residues 128-158 (GAGGKDGGTDAPSNPDHKAPEPQKSSDSPLP) and 181-311 (SSDD…QNQH). A compositionally biased stretch (polar residues) spans 245 to 258 (TPSSQVQLTQNSLP). Low complexity predominate over residues 259-273 (TNQQSSKNTSSTTQK). Positions 278-311 (VNANISKNPTPAANGFLSPTAQKQGTPNAVQNQH) are enriched in polar residues. The required for methylation dependent DNA-binding stretch occupies residues 470–609 (AKLDLDGLPN…QIRQYAYVNN (140 aa)). 3 C2H2-type zinc fingers span residues 501–523 (YICIVCKRSYVCLTSLRRHFNVH), 529–551 (YPCRYCERVFPLAEYRTKHEIHH), and 557–580 (YQCLTCGSSFINYQVMASHIRSVH). The required for sequence specific DNA-binding stretch occupies residues 519-701 (HFNVHSWEKK…EFEFVIPESY (183 aa)). The tract at residues 644–664 (DIDPDEPQQPASEGNHANSAT) is disordered. Positions 652–664 (QPASEGNHANSAT) are enriched in polar residues.

In terms of assembly, self associates. Interacts with tcf7l1-A, leading to repression of tcf7l1-A target genes. Interacts with ctnnd1, and this interaction may inhibit DNA-binding. Interacts with ncor1.

The protein resides in the nucleus. Functionally, transcriptional regulator with bimodal DNA-binding specificity. Binds to methylated CpG dinucleotides in the consensus sequence 5'-CGCG-3' and also binds to the non-methylated consensus sequence 5'-CTGCNA-3'. May recruit the N-CoR repressor complex to promote histone deacetylation and the formation of repressive chromatin structures in target gene promoters. Contributes to the repression of target genes of the Wnt signaling pathway and to the methylation-dependent repression of zygotic transcription prior to the mid-blastula transition (MBT). Also required for gastrulation movements. The polypeptide is Transcriptional regulator Kaiso (zbtb33) (Xenopus laevis (African clawed frog)).